The primary structure comprises 518 residues: Putative cysteine ligase BshC (518 aa).

Residues 404 to 474 (AAASAERLAA…RARQLTRLKR (71 aa)) are a coiled coil.

The protein belongs to the BshC family.

This Deinococcus geothermalis (strain DSM 11300 / CIP 105573 / AG-3a) protein is Putative cysteine ligase BshC.